Here is a 248-residue protein sequence, read N- to C-terminus: 23S rRNA (guanosine-2'-O-)-methyltransferase RlmB (248 aa).

Gly198, Leu218, and Leu227 together coordinate S-adenosyl-L-methionine.

This sequence belongs to the class IV-like SAM-binding methyltransferase superfamily. RNA methyltransferase TrmH family. RlmB subfamily.

It localises to the cytoplasm. The catalysed reaction is guanosine(2251) in 23S rRNA + S-adenosyl-L-methionine = 2'-O-methylguanosine(2251) in 23S rRNA + S-adenosyl-L-homocysteine + H(+). In terms of biological role, specifically methylates the ribose of guanosine 2251 in 23S rRNA. This is 23S rRNA (guanosine-2'-O-)-methyltransferase RlmB from Pseudomonas putida (strain ATCC 47054 / DSM 6125 / CFBP 8728 / NCIMB 11950 / KT2440).